A 189-amino-acid polypeptide reads, in one-letter code: 3-isopropylmalate dehydratase small subunit (189 aa).

The protein belongs to the LeuD family. LeuD type 1 subfamily. As to quaternary structure, heterodimer of LeuC and LeuD.

The catalysed reaction is (2R,3S)-3-isopropylmalate = (2S)-2-isopropylmalate. It participates in amino-acid biosynthesis; L-leucine biosynthesis; L-leucine from 3-methyl-2-oxobutanoate: step 2/4. In terms of biological role, catalyzes the isomerization between 2-isopropylmalate and 3-isopropylmalate, via the formation of 2-isopropylmaleate. This is 3-isopropylmalate dehydratase small subunit from Staphylococcus epidermidis (strain ATCC 35984 / DSM 28319 / BCRC 17069 / CCUG 31568 / BM 3577 / RP62A).